Here is a 451-residue protein sequence, read N- to C-terminus: G-protein coupled receptor 61 (451 aa).

A compositionally biased stretch (low complexity) spans 1-14 (MESSPIPQSSGNSS). The interval 1-31 (MESSPIPQSSGNSSTLGRVPQTPGPSTASGV) is disordered. The Extracellular segment spans residues 1-44 (MESSPIPQSSGNSSTLGRVPQTPGPSTASGVPEVGLRDVASESV). Residue Asn-12 is glycosylated (N-linked (GlcNAc...) asparagine). The chain crosses the membrane as a helical span at residues 45-67 (ALFFMLLLDLTAVAGNAAVMAVI). Residues 68–75 (AKTPALRK) are Cytoplasmic-facing. A helical transmembrane segment spans residues 76–98 (FVFVFHLCLVDLLAALTLMPLAM). Over 99–112 (LSSSALFDHALFGE) the chain is Extracellular. A helical transmembrane segment spans residues 113 to 135 (VACRLYLFLSVCFVSLAILSVSA). The Cytoplasmic portion of the chain corresponds to 136–155 (INVERYYYVVHPMRYEVRMT). A helical membrane pass occupies residues 156 to 178 (LGLVASVLVGVWVKALAMASVPV). The Extracellular portion of the chain corresponds to 179–206 (LGRVSWEEGAPSVPPGCSLQWSHSAYCQ). Residues 207–229 (LFVVVFAVLYFLLPLLLILVVYC) traverse the membrane as a helical segment. Residues 230 to 287 (SMFRVARVAAMQHGPLPTWMETPRQRSESLSSRSTMVTSSGAPQTTPHRTFGGGKAAV) are Cytoplasmic-facing. The helical transmembrane segment at 288–310 (VLLAVGGQFLLCWLPYFSFHLYV) threads the bilayer. Residues 311-324 (ALSAQPISTGQVES) are Extracellular-facing. A helical transmembrane segment spans residues 325–344 (VVTWIGYFCFTSNPFFYGCL). Topologically, residues 345 to 451 (NRQIRGELSK…RPAASPRLES (107 aa)) are cytoplasmic.

Belongs to the G-protein coupled receptor 1 family. In terms of assembly, forms heterodimer with MTNR1B. Interacts with ARRB1 and ARRB2 in a spontaneous and agonist-independent manner; leading to the internalization of GPR61 in the endosomal compartment. As to expression, expressed in brain; detected in frontal and temporal lobes, occipital pole, amygdala and hippocampus. Also expressed in testis and T cells, B cells, and monocyte. Low expression in many other tissues. Widely expressed in the hippocampus (at protein level).

It is found in the cell membrane. It localises to the endosome membrane. In terms of biological role, orphan G-protein coupled receptor. Constitutively activates the G(s)-alpha/cAMP signaling pathway. Shows a reciprocal regulatory interaction with the melatonin receptor MTNR1B most likely through receptor heteromerization. May be involved in the regulation of food intake and body weight. In Homo sapiens (Human), this protein is G-protein coupled receptor 61 (GPR61).